A 248-amino-acid chain; its full sequence is tRNA (guanine-N(1)-)-methyltransferase (248 aa).

S-adenosyl-L-methionine contacts are provided by residues glycine 117 and 137 to 142; that span reads IGDFVL.

The protein belongs to the RNA methyltransferase TrmD family. Homodimer.

The protein resides in the cytoplasm. It catalyses the reaction guanosine(37) in tRNA + S-adenosyl-L-methionine = N(1)-methylguanosine(37) in tRNA + S-adenosyl-L-homocysteine + H(+). Specifically methylates guanosine-37 in various tRNAs. This is tRNA (guanine-N(1)-)-methyltransferase from Polynucleobacter asymbioticus (strain DSM 18221 / CIP 109841 / QLW-P1DMWA-1) (Polynucleobacter necessarius subsp. asymbioticus).